A 640-amino-acid chain; its full sequence is MWFLNSVNLLFLVCSVALHLDAVNAWSPTNGYAPGVVDCDENINLVRKADAVSDDEADWLKVRHESTVPALKDFLQRGFKGFTNDTSIIDKLLATQDTAPKVAIACSGGGYRAMLSGAGMISAMDNRTDGANDHGLGGLLQSSTYLAGLSGGNWLVGTLAYNNWTSVQAIINNMTDDNSIWDISNSIVNPGGINIFSSISRWDDISDAVEEKKKAGFNTSITDVWGRALSYNFFPSLDEGGVGYTWNTLRDVDVFKNGEMPFPISVAVGRYPGTQVVNLNATVFEFNPFEMGSWDYTLHTFTDVRYAGTNVTNGTPNVTGKCVAGFDNTGFVMGTSSSLFNQFLLQLNTTDLPSFLYNLLHGFLTDASDDYDDISIWAPNPFYEITNIPSNYSQSISEDDTLYLVDGGEDGQNIPLTPLLQTEREIDVIFALDNSADTDQSWPDGFSLTQTYARQFGLQGKGIAFPYVPDVNTFTNLGLNTRPTFFGCDARNLTDLESIPPLVVYMPNTRESFNSNTSTFKMSYSTSERFKMIQNGFEAVTMKNLTKDENFMGCISCAILRRKQESLNYTLPSECDACFEKYCWNGTVDATTPISSTTSSSASSTSTSDSGNKENSARILAPRSTLSLLIGGLASVFISF.

Residues 1 to 25 form the signal peptide; the sequence is MWFLNSVNLLFLVCSVALHLDAVNA. The region spanning 38–589 is the PLA2c domain; the sequence is DCDENINLVR…EKYCWNGTVD (552 aa). Residues Asn-84, Asn-126, Asn-163, Asn-173, Asn-218, Asn-280, Asn-310, Asn-317, Asn-348, Asn-391, Asn-492, Asn-516, Asn-544, Asn-568, and Asn-585 are each glycosylated (N-linked (GlcNAc...) asparagine). Residues 594–610 show a composition bias toward low complexity; the sequence is ISSTTSSSASSTSTSDS. The segment at 594–616 is disordered; sequence ISSTTSSSASSTSTSDSGNKENS.

This sequence belongs to the lysophospholipase family. In terms of processing, highly glycosylated.

It is found in the secreted. The enzyme catalyses a 1-acyl-sn-glycero-3-phosphocholine + H2O = sn-glycerol 3-phosphocholine + a fatty acid + H(+). Functionally, catalyzes the release of fatty acids from lysophospholipids. At acidic pH the enzyme hydrolyzes all phospholipid substrates without metal ion. On the other hand, at alkaline pH the enzyme shows substrate specificity for phosphatidylcholine and lysophosphatidylcholine and requires Ca(2+), Fe(3+), or Al(3+) for the activity. This Kluyveromyces lactis (strain ATCC 8585 / CBS 2359 / DSM 70799 / NBRC 1267 / NRRL Y-1140 / WM37) (Yeast) protein is Lysophospholipase (PLB).